A 90-amino-acid chain; its full sequence is Large ribosomal subunit protein bL27 (90 aa).

Residues methionine 1–glycine 13 show a composition bias toward low complexity. The disordered stretch occupies residues methionine 1–arginine 20.

Belongs to the bacterial ribosomal protein bL27 family.

The sequence is that of Large ribosomal subunit protein bL27 from Anaplasma marginale (strain Florida).